The sequence spans 518 residues: GRIN2-like protein (518 aa).

Disordered regions lie at residues 1–23 (MGLESVVQTMNNQSPDNNSQSRT) and 467–500 (QTEPAQQTGKSDEDPLNKEPSSDKMEKKRPFRTM). Residues 476–494 (KSDEDPLNKEPSSDKMEKK) are compositionally biased toward basic and acidic residues.

As to quaternary structure, may interact with GNAO1.

Functionally, may be involved in neurite outgrowth. The polypeptide is GRIN2-like protein (Gallus gallus (Chicken)).